The chain runs to 1755 residues: Gag-Pro-Pol polyprotein (1755 aa).

Gly-2 carries the N-myristoyl glycine; by host lipid modification. Basic and acidic residues-rich tracts occupy residues 151-169 (YDEP…EKDH) and 178-191 (QRKE…KEKD). Residues 151–191 (YDEPYEEKEKADKNEEKDHVRKIKKVVQRKENSEGKRKEKD) are disordered. The PTAP/PSAP motif signature appears at 305–308 (PSAP). CCHC-type zinc fingers lie at residues 525-542 (PVCF…DCKD) and 552-569 (GLCP…ECKS). The interval 572–631 (DKDGNPLPPLETNAENSKNLVKGQSPSPAQKGDGVKGSGLNPEAPPFTIHDLPRGTPGSA) is disordered. Over residues 584–599 (NAENSKNLVKGQSPSP) the composition is skewed to polar residues. One can recognise a Peptidase A2 domain in the interval 766-841 (FLGLLDTGAD…LPFTLWGRDI (76 aa)). Asp-771 serves as the catalytic Protease; shared with dimeric partner. The Reverse transcriptase domain maps to 905 to 1093 (LQLGHLEESN…DNLKYLGTHI (189 aa)). Mg(2+) is bound by residues Asp-970, Asp-1045, Asp-1046, Asp-1316, Glu-1346, Asp-1366, and Asp-1429. The RNase H type-1 domain maps to 1307–1437 (LEKGIVIFTD…ADSLTRILTA (131 aa)). An Integrase-type zinc finger spans residues 1436–1477 (TALESAQESHALHHQNAAALRFQFHITREQAREIVKLCPNCP). Residues His-1445, His-1449, Cys-1473, and Cys-1476 each contribute to the Zn(2+) site. In terms of domain architecture, Integrase catalytic spans 1490-1647 (RGLKPRVLWQ…TAAERHWGPI (158 aa)). Asp-1501, Asp-1558, and Glu-1594 together coordinate Mg(2+). A DNA-binding region (integrase-type) is located at residues 1653 to 1702 (PMVMWKDLLTGSWKGPDVLITAGRGYACVFPQDAETPIWVPDRFIRPFTE). The disordered stretch occupies residues 1699–1755 (PFTERKEATPTPGTAEKTPPRDEKDQQESPKNESSPHQREDGLATSAGVDLRSGGGP). Residues 1716 to 1740 (TPPRDEKDQQESPKNESSPHQREDG) show a composition bias toward basic and acidic residues.

The protein belongs to the retroviral Pol polyprotein family. Homodimer; when myristoylated. In terms of assembly, homodimer. As to quaternary structure, homooctamer. Homotrimer. The cofactor is Mg(2+). In terms of processing, specific enzymatic cleavages in vivo yield mature proteins. Released by autocatalytic processing. Post-translationally, myristoylated. Myristoylation of the matrix (MA) domain mediates the transport and binding of Gag polyproteins to the host plasma membrane and is required for the assembly of viral particles.

It localises to the virion. It carries out the reaction DNA(n) + a 2'-deoxyribonucleoside 5'-triphosphate = DNA(n+1) + diphosphate. The enzyme catalyses Endonucleolytic cleavage to 5'-phosphomonoester.. The catalysed reaction is dUTP + H2O = dUMP + diphosphate + H(+). Inhibited by pepstatin A. Its function is as follows. Matrix protein. Nucleocapsid protein p14: Binds strongly to viral nucleic acids and promote their aggregation. Also destabilizes the nucleic acids duplexes via highly structured zinc-binding motifs. In terms of biological role, capsid protein. Functionally, NC-dUTPase has dUTPase activity, thereby preventing incorporation of uracil into DNA. Its function is as follows. The aspartyl protease mediates proteolytic cleavages of Gag and Gag-Pol polyproteins during or shortly after the release of the virion from the plasma membrane. Cleavages take place as an ordered, step-wise cascade to yield mature proteins. This process is called maturation. Displays maximal activity during the budding process just prior to particle release from the cell. RT is a multifunctional enzyme that converts the viral dimeric RNA genome into dsDNA in the cytoplasm, shortly after virus entry into the cell. This enzyme displays a DNA polymerase activity that can copy either DNA or RNA templates, and a ribonuclease H (RNase H) activity that cleaves the RNA strand of RNA-DNA heteroduplexes in a partially processive 3' to 5' endonucleasic mode. Conversion of viral genomic RNA into dsDNA requires many steps. A tRNA binds to the primer-binding site (PBS) situated at the 5' end of the viral RNA. RT uses the 3' end of the tRNA primer to perfom a short round of RNA-dependent minus-strand DNA synthesis. The reading proceeds through the U5 region and ends after the repeated (R) region which is present at both ends of viral RNA. The portion of the RNA-DNA heteroduplex is digested by the RNase H, resulting in a ssDNA product attached to the tRNA primer. This ssDNA/tRNA hybridizes with the identical R region situated at the 3' end of viral RNA. This template exchange, known as minus-strand DNA strong stop transfer, can be either intra- or intermolecular. RT uses the 3' end of this newly synthesized short ssDNA to perfom the RNA-dependent minus-strand DNA synthesis of the whole template. RNase H digests the RNA template except for a polypurine tract (PPT) situated at the 5' end of the genome. It is not clear if both polymerase and RNase H activities are simultaneous. RNase H probably can proceed both in a polymerase-dependent (RNA cut into small fragments by the same RT performing DNA synthesis) and a polymerase-independent mode (cleavage of remaining RNA fragments by free RTs). Secondly, RT performs DNA-directed plus-strand DNA synthesis using the PPT that has not been removed by RNase H as primers. PPT and tRNA primers are then removed by RNase H. The 3' and 5' ssDNA PBS regions hybridize to form a circular dsDNA intermediate. Strand displacement synthesis by RT to the PBS and PPT ends produces a blunt ended, linear dsDNA copy of the viral genome that includes long terminal repeats (LTRs) at both ends. In terms of biological role, catalyzes viral DNA integration into the host chromosome, by performing a series of DNA cutting and joining reactions. This is Gag-Pro-Pol polyprotein (gag-pro-pol) from Mus musculus (Mouse).